A 254-amino-acid polypeptide reads, in one-letter code: 5-oxoprolinase subunit A (254 aa).

It belongs to the LamB/PxpA family. Forms a complex composed of PxpA, PxpB and PxpC.

The catalysed reaction is 5-oxo-L-proline + ATP + 2 H2O = L-glutamate + ADP + phosphate + H(+). In terms of biological role, catalyzes the cleavage of 5-oxoproline to form L-glutamate coupled to the hydrolysis of ATP to ADP and inorganic phosphate. The polypeptide is 5-oxoprolinase subunit A (Acinetobacter baylyi (strain ATCC 33305 / BD413 / ADP1)).